The sequence spans 216 residues: Large ribosomal subunit protein uL3 (216 aa).

A disordered region spans residues 132–157 (FRGQGASHGTQAVHRKPGSIGGCATP).

It belongs to the universal ribosomal protein uL3 family. In terms of assembly, part of the 50S ribosomal subunit. Forms a cluster with proteins L14 and L19.

Functionally, one of the primary rRNA binding proteins, it binds directly near the 3'-end of the 23S rRNA, where it nucleates assembly of the 50S subunit. This chain is Large ribosomal subunit protein uL3, found in Saccharopolyspora erythraea (strain ATCC 11635 / DSM 40517 / JCM 4748 / NBRC 13426 / NCIMB 8594 / NRRL 2338).